A 241-amino-acid chain; its full sequence is Glutathione S-transferase theta-3 (241 aa).

A GST N-terminal domain is found at 2–82 (GLELYLDLMS…YLSRKYKAPD (81 aa)). Glutathione is bound by residues 53–54 (KV) and 66–67 (ES). Residues 88–222 (DLQTRARVDE…VVLKAKDMPP (135 aa)) enclose the GST C-terminal domain.

It belongs to the GST superfamily. Theta family. Homodimer. Expressed strongly in liver, and at lower levels in kidney and testis.

The protein localises to the cytoplasm. It catalyses the reaction RX + glutathione = an S-substituted glutathione + a halide anion + H(+). Its function is as follows. Conjugation of reduced glutathione to a wide number of exogenous and endogenous hydrophobic electrophiles. Shows high activity towards 4-nitrobenzyl chloride (4-NBC). Also has lower activity towards 1,2-epoxy-3-(p-nitrophenoxy)propane (EPNP), cumene hydroperoxide, 1-chloro-2,4-dinitrobenzene (CDNB), 7-chloro-4-nitrobenzo-2-oxa-1,3-diazole (NBD-Cl), and ethacrynic acid. In Mus musculus (Mouse), this protein is Glutathione S-transferase theta-3.